A 319-amino-acid chain; its full sequence is Ankyrin repeat domain-containing protein 1 (319 aa).

A disordered region spans residues 46–65; that stretch reads KTLPANSVKQGEEQRKSEKL. Residues 53–89 are a coiled coil; sequence VKQGEEQRKSEKLREAELKKKKLEQRSKLENLEDLEI. Residues 55–65 show a composition bias toward basic and acidic residues; that stretch reads QGEEQRKSEKL. ANK repeat units follow at residues 152-181, 185-214, 218-247, 251-280, and 284-315; these read YKRT…QIEF, LEST…KISA, LLST…DLNA, EGDT…DLKV, and AGKT…KNSR.

Interacts with TTN/titin and YBX1. As to expression, expressed in heart, cardiac muscle.

Its subcellular location is the nucleus. In terms of biological role, may play an important role in endothelial cell activation. May act as a nuclear transcription factor that negatively regulates the expression of cardiac genes. This chain is Ankyrin repeat domain-containing protein 1 (Ankrd1), found in Mus musculus (Mouse).